We begin with the raw amino-acid sequence, 615 residues long: Chaperone protein HscA (615 aa).

The protein belongs to the heat shock protein 70 family.

Its function is as follows. Chaperone involved in the maturation of iron-sulfur cluster-containing proteins. Has a low intrinsic ATPase activity which is markedly stimulated by HscB. Involved in the maturation of IscU. The polypeptide is Chaperone protein HscA (Xenorhabdus nematophila (strain ATCC 19061 / DSM 3370 / CCUG 14189 / LMG 1036 / NCIMB 9965 / AN6)).